A 227-amino-acid polypeptide reads, in one-letter code: Cytochrome c oxidase subunit 2 (227 aa).

Residues 1–14 (MAYPLQLGFQDASS) are Mitochondrial intermembrane-facing. A helical transmembrane segment spans residues 15–45 (PIMEELLHFHDHTLMIVFLISSLVLYIISLM). The Mitochondrial matrix segment spans residues 46–59 (LTTKLTHTSTMDAQ). A helical transmembrane segment spans residues 60 to 87 (EVETIWTILPAIILILIALPSLRILYMM). At 88–227 (DEINNPSLTV…HFENWTTTML (140 aa)) the chain is on the mitochondrial intermembrane side. Cu cation-binding residues include His161, Cys196, Glu198, Cys200, His204, and Met207. Glu198 lines the Mg(2+) pocket.

The protein belongs to the cytochrome c oxidase subunit 2 family. In terms of assembly, component of the cytochrome c oxidase (complex IV, CIV), a multisubunit enzyme composed of 14 subunits. The complex is composed of a catalytic core of 3 subunits MT-CO1, MT-CO2 and MT-CO3, encoded in the mitochondrial DNA, and 11 supernumerary subunits COX4I, COX5A, COX5B, COX6A, COX6B, COX6C, COX7A, COX7B, COX7C, COX8 and NDUFA4, which are encoded in the nuclear genome. The complex exists as a monomer or a dimer and forms supercomplexes (SCs) in the inner mitochondrial membrane with NADH-ubiquinone oxidoreductase (complex I, CI) and ubiquinol-cytochrome c oxidoreductase (cytochrome b-c1 complex, complex III, CIII), resulting in different assemblies (supercomplex SCI(1)III(2)IV(1) and megacomplex MCI(2)III(2)IV(2)). Found in a complex with TMEM177, COA6, COX18, COX20, SCO1 and SCO2. Interacts with TMEM177 in a COX20-dependent manner. Interacts with COX20. Interacts with COX16. Cu cation is required as a cofactor.

It localises to the mitochondrion inner membrane. It carries out the reaction 4 Fe(II)-[cytochrome c] + O2 + 8 H(+)(in) = 4 Fe(III)-[cytochrome c] + 2 H2O + 4 H(+)(out). In terms of biological role, component of the cytochrome c oxidase, the last enzyme in the mitochondrial electron transport chain which drives oxidative phosphorylation. The respiratory chain contains 3 multisubunit complexes succinate dehydrogenase (complex II, CII), ubiquinol-cytochrome c oxidoreductase (cytochrome b-c1 complex, complex III, CIII) and cytochrome c oxidase (complex IV, CIV), that cooperate to transfer electrons derived from NADH and succinate to molecular oxygen, creating an electrochemical gradient over the inner membrane that drives transmembrane transport and the ATP synthase. Cytochrome c oxidase is the component of the respiratory chain that catalyzes the reduction of oxygen to water. Electrons originating from reduced cytochrome c in the intermembrane space (IMS) are transferred via the dinuclear copper A center (CU(A)) of subunit 2 and heme A of subunit 1 to the active site in subunit 1, a binuclear center (BNC) formed by heme A3 and copper B (CU(B)). The BNC reduces molecular oxygen to 2 water molecules using 4 electrons from cytochrome c in the IMS and 4 protons from the mitochondrial matrix. The sequence is that of Cytochrome c oxidase subunit 2 (MT-CO2) from Tupaia glis (Common tree shrew).